Here is a 331-residue protein sequence, read N- to C-terminus: Probable endo-beta-1,4-glucanase B (331 aa).

The N-terminal stretch at 1–18 (MKFQSTLLLAAAAGSALA) is a signal peptide. N-linked (GlcNAc...) asparagine glycosylation is found at N38 and N100. The active-site Proton donor is E160. N211 is a glycosylation site (N-linked (GlcNAc...) asparagine). The active-site Nucleophile is the E266. An N-linked (GlcNAc...) asparagine glycan is attached at N288.

Belongs to the glycosyl hydrolase 5 (cellulase A) family.

It is found in the secreted. The enzyme catalyses Endohydrolysis of (1-&gt;4)-beta-D-glucosidic linkages in cellulose, lichenin and cereal beta-D-glucans.. Functionally, has endoglucanase activity on substrates containing beta-1,4 glycosidic bonds, like in carboxymethylcellulose (CMC), hydroxyethylcellulose (HEC) and beta-glucan. Involved in the degradation of complex natural cellulosic substrates. In Aspergillus niger (strain ATCC MYA-4892 / CBS 513.88 / FGSC A1513), this protein is Probable endo-beta-1,4-glucanase B (eglB).